Here is a 132-residue protein sequence, read N- to C-terminus: Small ribosomal subunit protein uS8 (132 aa).

The protein belongs to the universal ribosomal protein uS8 family. As to quaternary structure, part of the 30S ribosomal subunit. Contacts proteins S5 and S12.

Its function is as follows. One of the primary rRNA binding proteins, it binds directly to 16S rRNA central domain where it helps coordinate assembly of the platform of the 30S subunit. The chain is Small ribosomal subunit protein uS8 from Tropheryma whipplei (strain Twist) (Whipple's bacillus).